Reading from the N-terminus, the 95-residue chain is GSGPTYCWNEANNPGGPNRCSNNKQCDGARTCSSSGFCQGTSRKPDPGPKGPTYCWDEAKNPGGPNRCSNSKQCDGARTCSSSGFCQGTAGHAAA.

An SD1 region spans residues 3-41; it reads GPTYCWNEANNPGGPNRCSNNKQCDGARTCSSSGFCQGT. 5 disulfides stabilise this stretch: cysteine 7–cysteine 55, cysteine 20–cysteine 32, cysteine 26–cysteine 38, cysteine 68–cysteine 80, and cysteine 74–cysteine 86. Residues 51-89 form an SD2 region; it reads GPTYCWDEAKNPGGPNRCSNSKQCDGARTCSSSGFCQGT.

Has strong anti-HIV activity against T-tropic strains of HIV-1 and weaker activity against M-tropic strains of HIV-1. Inhibits HIV-1 fusion and infection of CD4 LTR beta-gal cells in vitro. Inhibits fusion of HIV infected CEM-SS cells with uninfected CEM-SS cells, and fusion of HIV-1 Env expressing HL2/3 cells with CD4 LTR beta-gal cells. Binds to HIV gp120, HIV gp160 and to a lesser extent HIV gp41. Binding to HIV gp120 is glycosylation dependent. Binds with high specificity to the tetrasaccharide Man-alpha-1,2-Man-alpha-1,6-Man-alpha-1,6-Man and also binds the higher-order oligosaccharides oligomannose 8 and oligomannose 9. Does not bind to monosaccharides, complex or hybrid N-linked oligosaccharides or chitin. In Scytonema varium, this protein is Scytovirin.